A 268-amino-acid chain; its full sequence is Nitrite transporter NirC (268 aa).

The Cytoplasmic portion of the chain corresponds to 1–25; sequence MFTDTINKCAANAARIARLSANNPL. A helical membrane pass occupies residues 26–46; it reads GFWVSSAMAGAYVGLGIILIF. At 47 to 59 the chain is on the periplasmic side; that stretch reads TLGNLLDPSVRPL. A helical transmembrane segment spans residues 60–80; sequence VMGATFGIALTLVIIAGSELF. Residues 81–112 are Cytoplasmic-facing; it reads TGHTMFLTFGVKAGSISHGQMWAILPQTWLGN. A helical transmembrane segment spans residues 113–133; it reads LVGSVFVAMLYSWGGGSLLPV. Over 134–151 the chain is Periplasmic; that stretch reads DTSIVHSVALAKTTAPAM. Residues 152–172 form a helical membrane-spanning segment; sequence VLFFKGALCNWLVCLAIWMAL. Topologically, residues 173 to 179 are cytoplasmic; sequence RTEGAAK. A helical transmembrane segment spans residues 180–200; that stretch reads FIAIWWCLLAFIASGYEHSIA. Topologically, residues 201 to 225 are periplasmic; sequence NMTLFALSWFGNHSEAYTLAGIGHN. A helical membrane pass occupies residues 226-246; that stretch reads LLWVTLGNTLSGAVFMGLGYW. At 247 to 268 the chain is on the cytoplasmic side; the sequence is YATPKANRPVADKFNQTETAAG.

This sequence belongs to the FNT transporter (TC 1.A.16) family.

The protein localises to the cell inner membrane. Functionally, catalyzes nitrite uptake and nitrite export across the cytoplasmic membrane. Is up to 10-fold more active than NarK or NarU in nitrite uptake for subsequent reduction in the cytoplasm by the NirB/NirD nitrite reductase. This Escherichia coli (strain K12) protein is Nitrite transporter NirC (nirC).